Consider the following 256-residue polypeptide: NAD(P)H-hydrate epimerase (256 aa).

Residues 1–18 (MADPRRDPAAESKDRPST) show a composition bias toward basic and acidic residues. A disordered region spans residues 1–21 (MADPRRDPAAESKDRPSTERV). The YjeF N-terminal domain maps to 23–229 (AYTADAVRAA…DLGLEPYLRR (207 aa)). 74–78 (DNGGD) is a (6S)-NADPHX binding site. 2 residues coordinate K(+): N75 and D135. (6S)-NADPHX is bound by residues 139–147 (GIGRLADRR) and D172. S175 contacts K(+).

This sequence belongs to the NnrE/AIBP family. It depends on K(+) as a cofactor.

The enzyme catalyses (6R)-NADHX = (6S)-NADHX. It carries out the reaction (6R)-NADPHX = (6S)-NADPHX. Functionally, catalyzes the epimerization of the S- and R-forms of NAD(P)HX, a damaged form of NAD(P)H that is a result of enzymatic or heat-dependent hydration. This is a prerequisite for the S-specific NAD(P)H-hydrate dehydratase to allow the repair of both epimers of NAD(P)HX. The sequence is that of NAD(P)H-hydrate epimerase from Microbacterium testaceum (strain StLB037).